Consider the following 222-residue polypeptide: Tetratricopeptide repeat protein 9A (222 aa).

2 disordered regions span residues 1–49 (MERK…AAAE) and 88–116 (KGLL…GRLS). A TPR 1 repeat occupies 56–89 (RAHEFKSQGAQCYKDKKFREAIGKYHRALLELKG). Ser-105 bears the Phosphoserine mark. 2 TPR repeats span residues 125-160 (AIEI…LKKE) and 161-194 (GENF…RTQQ).

It belongs to the TTC9 family.

This chain is Tetratricopeptide repeat protein 9A (TTC9), found in Homo sapiens (Human).